The chain runs to 225 residues: Reticulon-like protein B9 (225 aa).

One can recognise a Reticulon domain in the interval 39–224; the sequence is VADILLWREP…PRGTVKNKKF (186 aa). Helical transmembrane passes span 50 to 70, 72 to 92, and 152 to 172; these read IAATLVIGVSILWFLMEVVEY, FITLICHASMTSMLFFFIWST, and YIVSIIGTYFNFVNLLFIGFV.

Its subcellular location is the endoplasmic reticulum membrane. The protein is Reticulon-like protein B9 (RTNLB9) of Arabidopsis thaliana (Mouse-ear cress).